Consider the following 292-residue polypeptide: Keratin-associated protein 10-9 (292 aa).

Tandem repeats lie at residues 26 to 30, 31 to 35, 36 to 40, 57 to 61, 79 to 83, 99 to 103, 104 to 108, 109 to 113, 114 to 118, 120 to 124, 130 to 134, 140 to 144, 145 to 149, 150 to 154, 162 to 166, 172 to 176, 182 to 186, 187 to 191, 192 to 196, 197 to 201, 209 to 213, 219 to 223, 224 to 228, 243 to 247, and 250 to 254. The tract at residues 26 to 254 is 25 X 5 AA repeats of C-C-X(3); the sequence is CCEPPCCATS…VPVSSCCAPT (229 aa).

It belongs to the KRTAP type 10 family. Interacts with hair keratins. As to expression, restricted to a narrow region of the hair fiber cuticle, lying approximately 20 cell layers above the apex of the dermal papilla of the hair root; not detected in any other tissues.

Its function is as follows. In the hair cortex, hair keratin intermediate filaments are embedded in an interfilamentous matrix, consisting of hair keratin-associated proteins (KRTAP), which are essential for the formation of a rigid and resistant hair shaft through their extensive disulfide bond cross-linking with abundant cysteine residues of hair keratins. The matrix proteins include the high-sulfur and high-glycine-tyrosine keratins. The sequence is that of Keratin-associated protein 10-9 (KRTAP10-9) from Homo sapiens (Human).